The primary structure comprises 287 residues: RxLR effector protein Avr4 (287 aa).

A signal peptide spans 1–24 (MRSLHILLVFTASLLASLTESAKA). Positions 42 to 55 (RFLRAQTDEKNEER) match the RxLR-dEER motif. The interval 115–138 (KYERMQWQKLKEGETLTFMRLGDR) is W1 motif. The segment at 148-171 (QLLRWVAQKKPVESVYDDLQVAGF) is W2 motif. The tract at residues 221–244 (LFEKWAMEGTHIKSVITTLKLNGK) is W3 motif. A y motif region spans residues 246–267 (ASEMANNENFPALLKYVKLYLD).

It belongs to the RxLR effector family.

It localises to the secreted. It is found in the host cytoplasm. The protein localises to the host nucleus. The protein resides in the host nucleolus. Its subcellular location is the host cytoskeleton. Secreted effector that acts as an elicitor of hypersensitive response (HR) specifically on plants carrying defense protein R4, through its interaction with this protein. The polypeptide is RxLR effector protein Avr4 (Phytophthora infestans (strain T30-4) (Potato late blight agent)).